The chain runs to 227 residues: MKPSERICAALDFPTFAAAEPFARAVAPEVGLLKVGLELFAAEGPAAVRAAARLGRPVFLDLKLHDIPNTVEGAARSAAASGAALLTVHAAGGAEMVKAAVRGAGPGVRVLAVTVLTSLDAAALDAVGLAGPPEAAVVRLARLAVGAGAGGIVCSPHEVAAVRAAVGPGPLLVVPGVRPAGAAKGDQARVATPAEAVRAGADVIVVGRPLRDAPDPAAAARAIAAGL.

Residues D12, K34, 61 to 70 (DLKLHDIPNT), T117, R178, Q187, G207, and R208 contribute to the substrate site. K63 serves as the catalytic Proton donor.

This sequence belongs to the OMP decarboxylase family. Type 1 subfamily. Homodimer.

It carries out the reaction orotidine 5'-phosphate + H(+) = UMP + CO2. It functions in the pathway pyrimidine metabolism; UMP biosynthesis via de novo pathway; UMP from orotate: step 2/2. Catalyzes the decarboxylation of orotidine 5'-monophosphate (OMP) to uridine 5'-monophosphate (UMP). This is Orotidine 5'-phosphate decarboxylase from Anaeromyxobacter sp. (strain K).